The following is a 200-amino-acid chain: Guanylate kinase (200 aa).

Positions 4 to 183 constitute a Guanylate kinase-like domain; it reads GAVLIISGPS…AKEAMVAIAR (180 aa). 11-18 is an ATP binding site; it reads GPSGCGKS.

Belongs to the guanylate kinase family.

Its subcellular location is the cytoplasm. It carries out the reaction GMP + ATP = GDP + ADP. Essential for recycling GMP and indirectly, cGMP. The chain is Guanylate kinase from Helicobacter hepaticus (strain ATCC 51449 / 3B1).